The sequence spans 184 residues: dCTP deaminase (184 aa).

Residues 107-112, 131-133, glutamine 152, tyrosine 166, and glutamine 176 contribute to the dCTP site; these read KSTYAR and TLE. Catalysis depends on glutamate 133, which acts as the Proton donor/acceptor.

Belongs to the dCTP deaminase family. Homotrimer.

The enzyme catalyses dCTP + H2O + H(+) = dUTP + NH4(+). It participates in pyrimidine metabolism; dUMP biosynthesis; dUMP from dCTP (dUTP route): step 1/2. Functionally, catalyzes the deamination of dCTP to dUTP. In Paramagnetospirillum magneticum (strain ATCC 700264 / AMB-1) (Magnetospirillum magneticum), this protein is dCTP deaminase.